The primary structure comprises 497 residues: Glycerol kinase (497 aa).

Residue T11 participates in ADP binding. Positions 11, 12, and 13 each coordinate ATP. Residue T11 participates in sn-glycerol 3-phosphate binding. Residue R15 coordinates ADP. Sn-glycerol 3-phosphate-binding residues include R81, E82, Y133, and D242. Glycerol-binding residues include R81, E82, Y133, D242, and Q243. ADP contacts are provided by T264 and G307. Residues T264, G307, Q311, and G412 each contribute to the ATP site. Residues G412 and N416 each contribute to the ADP site.

The protein belongs to the FGGY kinase family.

It catalyses the reaction glycerol + ATP = sn-glycerol 3-phosphate + ADP + H(+). It functions in the pathway polyol metabolism; glycerol degradation via glycerol kinase pathway; sn-glycerol 3-phosphate from glycerol: step 1/1. With respect to regulation, inhibited by fructose 1,6-bisphosphate (FBP). Key enzyme in the regulation of glycerol uptake and metabolism. Catalyzes the phosphorylation of glycerol to yield sn-glycerol 3-phosphate. This is Glycerol kinase from Polaromonas sp. (strain JS666 / ATCC BAA-500).